The sequence spans 200 residues: Max dimerization protein 3 (200 aa).

Disordered stretches follow at residues 26-56 (EHGYASILPCDPATPGRRKRQRTNSNPDNVR) and 134-164 (LLPPNTERIRTDSLDSSTLSSERSDSDQEDL). Positions 54 to 106 (NVRSVHNELEKHRRAQLRRCLEQLKQQVPLSMENSRHTTLSLLHRAKQHIKKL) constitute a bHLH domain.

In terms of assembly, efficient DNA binding requires dimerization with another bHLH protein. Binds DNA as a heterodimer with MAX.

Its subcellular location is the nucleus. Functionally, transcriptional repressor. Binds with MAX to form a sequence-specific DNA-binding protein complex which recognizes the core sequence 5'-CAC[GA]TG-3'. This chain is Max dimerization protein 3 (mxd3), found in Xenopus tropicalis (Western clawed frog).